A 107-amino-acid chain; its full sequence is Auxin-responsive protein SAUR50 (107 aa).

Belongs to the ARG7 family. As to quaternary structure, interacts with BZR1. As to expression, expressed in cotyledons, leaves, flowers and siliques.

Its subcellular location is the cell membrane. Its function is as follows. Provide a mechanistic link between auxin and plasma membrane H(+)-ATPases (PM H(+)-ATPases, e.g. AHA1 and AHA2), and triggers PM H(+)-ATPases activity by promoting phosphorylation of their C-terminal autoinhibitory domain as a result of PP2C-D subfamily of type 2C phosphatases inhibition, thus leading to the acidification of the apoplast and the facilitation of solutes and water uptake to drive cell expansion. Triggers plant growth probably by promoting cell elongation. Regulates branch angles and bending. Effector of hormonal and environmental signals in plant growth. This is Auxin-responsive protein SAUR50 from Arabidopsis thaliana (Mouse-ear cress).